Here is a 475-residue protein sequence, read N- to C-terminus: ATP synthase subunit beta, chloroplastic (475 aa).

156–163 lines the ATP pocket; that stretch reads GGAGVGKT.

The protein belongs to the ATPase alpha/beta chains family. F-type ATPases have 2 components, CF(1) - the catalytic core - and CF(0) - the membrane proton channel. CF(1) has five subunits: alpha(3), beta(3), gamma(1), delta(1), epsilon(1). CF(0) has four main subunits: a(1), b(1), b'(1) and c(9-12).

It localises to the plastid. The protein localises to the chloroplast thylakoid membrane. It carries out the reaction ATP + H2O + 4 H(+)(in) = ADP + phosphate + 5 H(+)(out). Its function is as follows. Produces ATP from ADP in the presence of a proton gradient across the membrane. The catalytic sites are hosted primarily by the beta subunits. The chain is ATP synthase subunit beta, chloroplastic from Trieres chinensis (Marine centric diatom).